Consider the following 180-residue polypeptide: Large ribosomal subunit protein uL6 (180 aa).

This sequence belongs to the universal ribosomal protein uL6 family. As to quaternary structure, part of the 50S ribosomal subunit.

Functionally, this protein binds to the 23S rRNA, and is important in its secondary structure. It is located near the subunit interface in the base of the L7/L12 stalk, and near the tRNA binding site of the peptidyltransferase center. The chain is Large ribosomal subunit protein uL6 from Clostridium botulinum (strain Alaska E43 / Type E3).